The following is a 136-amino-acid chain: Aspartate 1-decarboxylase (136 aa).

Ser-25 acts as the Schiff-base intermediate with substrate; via pyruvic acid in catalysis. Ser-25 carries the pyruvic acid (Ser) modification. A substrate-binding site is contributed by Thr-57. Tyr-58 acts as the Proton donor in catalysis. 73–75 (GAA) contacts substrate.

The protein belongs to the PanD family. Heterooctamer of four alpha and four beta subunits. Pyruvate serves as cofactor. Is synthesized initially as an inactive proenzyme, which is activated by self-cleavage at a specific serine bond to produce a beta-subunit with a hydroxyl group at its C-terminus and an alpha-subunit with a pyruvoyl group at its N-terminus.

It localises to the cytoplasm. It catalyses the reaction L-aspartate + H(+) = beta-alanine + CO2. The protein operates within cofactor biosynthesis; (R)-pantothenate biosynthesis; beta-alanine from L-aspartate: step 1/1. Functionally, catalyzes the pyruvoyl-dependent decarboxylation of aspartate to produce beta-alanine. The polypeptide is Aspartate 1-decarboxylase (Mycolicibacterium smegmatis (strain ATCC 700084 / mc(2)155) (Mycobacterium smegmatis)).